The chain runs to 30 residues: Babycurus-toxin 1 (30 aa).

The LCN-type CS-alpha/beta domain occupies 2–30; it reads KDGYPTNSKGCKISGCLPGENKFCLNECQ.

The protein belongs to the long (4 C-C) scorpion toxin superfamily. Sodium channel inhibitor family. In terms of tissue distribution, expressed by the venom gland.

The protein resides in the secreted. In terms of biological role, binds to sodium channels (Nav) and inhibits both the activation and inactivation of the activated channels, thereby blocking neuronal transmission. In Babycurus centrurimorphus (East African scorpion), this protein is Babycurus-toxin 1.